A 120-amino-acid chain; its full sequence is NAD(P)H-quinone oxidoreductase subunit 3, chloroplastic (120 aa).

Helical transmembrane passes span isoleucine 9 to alanine 29, methionine 64 to methionine 84, and valine 88 to leucine 108.

This sequence belongs to the complex I subunit 3 family. NDH is composed of at least 16 different subunits, 5 of which are encoded in the nucleus.

The protein resides in the plastid. It localises to the chloroplast thylakoid membrane. The enzyme catalyses a plastoquinone + NADH + (n+1) H(+)(in) = a plastoquinol + NAD(+) + n H(+)(out). It carries out the reaction a plastoquinone + NADPH + (n+1) H(+)(in) = a plastoquinol + NADP(+) + n H(+)(out). NDH shuttles electrons from NAD(P)H:plastoquinone, via FMN and iron-sulfur (Fe-S) centers, to quinones in the photosynthetic chain and possibly in a chloroplast respiratory chain. The immediate electron acceptor for the enzyme in this species is believed to be plastoquinone. Couples the redox reaction to proton translocation, and thus conserves the redox energy in a proton gradient. The polypeptide is NAD(P)H-quinone oxidoreductase subunit 3, chloroplastic (Oryza nivara (Indian wild rice)).